The following is a 257-amino-acid chain: Zinc transporter ZupT (257 aa).

8 consecutive transmembrane segments (helical) span residues 5-25, 33-53, 61-81, 109-129, 137-157, 171-191, 195-215, and 236-256; these read LILT…GVLG, LAFS…MEML, GMSP…YFGL, AILL…ATFV, LGFG…LAVA, IFWA…AWLI, LVSP…MVAL, and GVLC…TIGI. Fe(2+)-binding residues include Asn-120 and Glu-123. Zn(2+) is bound by residues Glu-123 and His-148. Fe(2+) contacts are provided by Asn-149, Glu-152, and Glu-181. Glu-152 contacts Zn(2+).

The protein belongs to the ZIP transporter (TC 2.A.5) family. ZupT subfamily.

The protein localises to the cell inner membrane. It catalyses the reaction Zn(2+)(in) = Zn(2+)(out). Mediates zinc uptake. May also transport other divalent cations. The sequence is that of Zinc transporter ZupT from Salmonella paratyphi A (strain ATCC 9150 / SARB42).